The chain runs to 181 residues: tRNA-splicing endonuclease (181 aa).

Catalysis depends on residues Tyr-118, His-126, and Lys-157.

Belongs to the tRNA-intron endonuclease family. Archaeal short subfamily. As to quaternary structure, homotetramer; although the tetramer contains four active sites, only two participate in the cleavage. Therefore, it should be considered as a dimer of dimers.

The catalysed reaction is pretRNA = a 3'-half-tRNA molecule with a 5'-OH end + a 5'-half-tRNA molecule with a 2',3'-cyclic phosphate end + an intron with a 2',3'-cyclic phosphate and a 5'-hydroxyl terminus.. Endonuclease that removes tRNA introns. Cleaves pre-tRNA at the 5'- and 3'-splice sites to release the intron. The products are an intron and two tRNA half-molecules bearing 2',3' cyclic phosphate and 5'-OH termini. Recognizes a pseudosymmetric substrate in which 2 bulged loops of 3 bases are separated by a stem of 4 bp. The protein is tRNA-splicing endonuclease of Sulfolobus acidocaldarius (strain ATCC 33909 / DSM 639 / JCM 8929 / NBRC 15157 / NCIMB 11770).